A 100-amino-acid chain; its full sequence is Small ribosomal subunit protein uS14 (100 aa).

It belongs to the universal ribosomal protein uS14 family. Part of the 30S ribosomal subunit. Contacts proteins S3 and S10.

In terms of biological role, binds 16S rRNA, required for the assembly of 30S particles and may also be responsible for determining the conformation of the 16S rRNA at the A site. This is Small ribosomal subunit protein uS14 from Gloeothece citriformis (strain PCC 7424) (Cyanothece sp. (strain PCC 7424)).